Consider the following 84-residue polypeptide: MGKRKSKRKAPTKAKAVMPLDTQFNCPFCNHERVCEVKMDREKNVGYISCRVCSEDFQTNINYLSEPIDVYSDWVDACEQANNA.

Zn(2+) is bound by residues cysteine 26, cysteine 29, cysteine 50, and cysteine 53.

It belongs to the ELOF1 family.

The protein resides in the nucleus. Functionally, transcription elongation factor implicated in the maintenance of proper chromatin structure in actively transcribed regions. The sequence is that of Transcription elongation factor 1 homolog from Caenorhabditis elegans.